Here is a 215-residue protein sequence, read N- to C-terminus: Pyrrolidone-carboxylate peptidase (215 aa).

Active-site residues include E80, C143, and H167.

This sequence belongs to the peptidase C15 family. As to quaternary structure, homotetramer.

The protein resides in the cytoplasm. The enzyme catalyses Release of an N-terminal pyroglutamyl group from a polypeptide, the second amino acid generally not being Pro.. Its function is as follows. Removes 5-oxoproline from various penultimate amino acid residues except L-proline. This chain is Pyrrolidone-carboxylate peptidase, found in Bacillus anthracis.